Consider the following 331-residue polypeptide: Holliday junction branch migration complex subunit RuvB (331 aa).

The interval 1–182 (MSSDTLHKYE…FGIPLHLEFY (182 aa)) is large ATPase domain (RuvB-L). ATP is bound by residues Leu-21, Arg-22, Gly-63, Lys-66, Thr-67, Thr-68, 129–131 (EDY), Arg-172, Tyr-182, and Arg-219. Residue Thr-67 coordinates Mg(2+). Positions 183-254 (SVDELVLVIK…FANSALFRLG (72 aa)) are small ATPAse domain (RuvB-S). The head domain (RuvB-H) stretch occupies residues 257–331 (GAGFDKMDLK…FEYLLSSKYI (75 aa)). 2 residues coordinate DNA: Arg-310 and Arg-315.

This sequence belongs to the RuvB family. Homohexamer. Forms an RuvA(8)-RuvB(12)-Holliday junction (HJ) complex. HJ DNA is sandwiched between 2 RuvA tetramers; dsDNA enters through RuvA and exits via RuvB. An RuvB hexamer assembles on each DNA strand where it exits the tetramer. Each RuvB hexamer is contacted by two RuvA subunits (via domain III) on 2 adjacent RuvB subunits; this complex drives branch migration. In the full resolvosome a probable DNA-RuvA(4)-RuvB(12)-RuvC(2) complex forms which resolves the HJ.

Its subcellular location is the cytoplasm. The enzyme catalyses ATP + H2O = ADP + phosphate + H(+). In terms of biological role, the RuvA-RuvB-RuvC complex processes Holliday junction (HJ) DNA during genetic recombination and DNA repair, while the RuvA-RuvB complex plays an important role in the rescue of blocked DNA replication forks via replication fork reversal (RFR). RuvA specifically binds to HJ cruciform DNA, conferring on it an open structure. The RuvB hexamer acts as an ATP-dependent pump, pulling dsDNA into and through the RuvAB complex. RuvB forms 2 homohexamers on either side of HJ DNA bound by 1 or 2 RuvA tetramers; 4 subunits per hexamer contact DNA at a time. Coordinated motions by a converter formed by DNA-disengaged RuvB subunits stimulates ATP hydrolysis and nucleotide exchange. Immobilization of the converter enables RuvB to convert the ATP-contained energy into a lever motion, pulling 2 nucleotides of DNA out of the RuvA tetramer per ATP hydrolyzed, thus driving DNA branch migration. The RuvB motors rotate together with the DNA substrate, which together with the progressing nucleotide cycle form the mechanistic basis for DNA recombination by continuous HJ branch migration. Branch migration allows RuvC to scan DNA until it finds its consensus sequence, where it cleaves and resolves cruciform DNA. This is Holliday junction branch migration complex subunit RuvB from Anaplasma marginale (strain St. Maries).